The sequence spans 371 residues: Queuine tRNA-ribosyltransferase (371 aa).

Aspartate 90 serves as the catalytic Proton acceptor. Substrate-binding positions include 90–94 (DSGGF), aspartate 144, glutamine 188, and glycine 215. The interval 246-252 (GVGTPED) is RNA binding. Catalysis depends on aspartate 265, which acts as the Nucleophile. An RNA binding; important for wobble base 34 recognition region spans residues 270-274 (TRNAR). Zn(2+) is bound by residues cysteine 303, cysteine 305, cysteine 308, and histidine 334.

The protein belongs to the queuine tRNA-ribosyltransferase family. Homodimer. Within each dimer, one monomer is responsible for RNA recognition and catalysis, while the other monomer binds to the replacement base PreQ1. Requires Zn(2+) as cofactor.

The catalysed reaction is 7-aminomethyl-7-carbaguanine + guanosine(34) in tRNA = 7-aminomethyl-7-carbaguanosine(34) in tRNA + guanine. It functions in the pathway tRNA modification; tRNA-queuosine biosynthesis. Its function is as follows. Catalyzes the base-exchange of a guanine (G) residue with the queuine precursor 7-aminomethyl-7-deazaguanine (PreQ1) at position 34 (anticodon wobble position) in tRNAs with GU(N) anticodons (tRNA-Asp, -Asn, -His and -Tyr). Catalysis occurs through a double-displacement mechanism. The nucleophile active site attacks the C1' of nucleotide 34 to detach the guanine base from the RNA, forming a covalent enzyme-RNA intermediate. The proton acceptor active site deprotonates the incoming PreQ1, allowing a nucleophilic attack on the C1' of the ribose to form the product. After dissociation, two additional enzymatic reactions on the tRNA convert PreQ1 to queuine (Q), resulting in the hypermodified nucleoside queuosine (7-(((4,5-cis-dihydroxy-2-cyclopenten-1-yl)amino)methyl)-7-deazaguanosine). The sequence is that of Queuine tRNA-ribosyltransferase from Neisseria meningitidis serogroup A / serotype 4A (strain DSM 15465 / Z2491).